The chain runs to 78 residues: Large ribosomal subunit protein bL28 (78 aa).

Belongs to the bacterial ribosomal protein bL28 family.

The sequence is that of Large ribosomal subunit protein bL28 from Erwinia tasmaniensis (strain DSM 17950 / CFBP 7177 / CIP 109463 / NCPPB 4357 / Et1/99).